Here is a 326-residue protein sequence, read N- to C-terminus: Tagatose 1,6-diphosphate aldolase (326 aa).

The protein belongs to the aldolase LacD family.

The catalysed reaction is D-tagatofuranose 1,6-bisphosphate = D-glyceraldehyde 3-phosphate + dihydroxyacetone phosphate. Its pathway is carbohydrate metabolism; D-tagatose 6-phosphate degradation; D-glyceraldehyde 3-phosphate and glycerone phosphate from D-tagatose 6-phosphate: step 2/2. The protein is Tagatose 1,6-diphosphate aldolase of Streptococcus pneumoniae serotype 4 (strain ATCC BAA-334 / TIGR4).